A 311-amino-acid polypeptide reads, in one-letter code: Olfactory receptor-like protein OLF1 (311 aa).

At 1-24 (MDGNYTLVTEFILLGFPTRPELQI) the chain is on the extracellular side. N-linked (GlcNAc...) asparagine glycosylation occurs at Asn4. The helical transmembrane segment at 25–48 (VLFLVFLTLYGIILTGNIGLMMLI) threads the bilayer. Residues 49-56 (RTDPHLQT) lie on the Cytoplasmic side of the membrane. Residues 57-78 (PMYFFLSNLSFADLCFSSAIVP) form a helical membrane-spanning segment. The Extracellular segment spans residues 79 to 99 (KMLVNFLSENKSISLYGCALQ). Residues 100 to 119 (FYFSCAFADTESFILAAMAY) form a helical membrane-spanning segment. Topologically, residues 120–138 (DRYVAICNPLLYTVVMSRG) are cytoplasmic. A helical membrane pass occupies residues 139 to 157 (ICVWLIVLSYIGGNMSSLV). Residues 158 to 195 (HTSFAFILKYCDKNVINHFFCDLPPLLKLSCTDTSVNE) lie on the Extracellular side of the membrane. The helical transmembrane segment at 196-218 (WLLSTYGSSVEIFCFIVIVISYY) threads the bilayer. Residues 219 to 235 (FILRSVLRIRSSSGRKK) are Cytoplasmic-facing. Residues 236-259 (TFSTCASHLTSVAIYQGTLLFIYS) traverse the membrane as a helical segment. Topologically, residues 260-271 (RPTYLYTPNTDK) are extracellular. A helical transmembrane segment spans residues 272–291 (IISVFYTIIIPVLNPLIYSL). Residues 292–311 (RNKDVKDAAKRAVRLKVDSS) lie on the Cytoplasmic side of the membrane.

Belongs to the G-protein coupled receptor 1 family.

The protein localises to the cell membrane. Functionally, putative odorant or sperm cell receptor. This chain is Olfactory receptor-like protein OLF1, found in Canis lupus familiaris (Dog).